The primary structure comprises 577 residues: Polyadenylate-binding protein, cytoplasmic and nuclear (577 aa).

Residues 1 to 10 (MADITDKTAE) show a composition bias toward basic and acidic residues. Residues 1 to 36 (MADITDKTAEQLENLNIQDDQKQAATGSESQSVENS) are disordered. N-acetylalanine is present on A2. A Glycyl lysine isopeptide (Lys-Gly) (interchain with G-Cter in ubiquitin) cross-link involves residue K7. The required and sufficient for nuclear export stretch occupies residues 9–61 (AEQLENLNIQDDQKQAATGSESQSVENSSASLYVGDLEPSVSEAHLYDIFSPI). Residues 11-27 (QLENLNIQDDQKQAATG) are compositionally biased toward polar residues. A Nuclear export signal motif is present at residues 12–17 (LENLNI). RRM domains lie at 38–116 (ASLY…WSQR), 126–203 (GNIF…PHLS), 219–296 (TNLY…RAQK), and 322–399 (VNLF…IAQR). At R107 the chain carries Omega-N-methylarginine. The residue at position 249 (S249) is a Phosphoserine. The tract at residues 281-317 (DSELNGEKLYVGRAQKKNERMHVLKKQYEAYRLEKMA) is required and sufficient for nuclear import. Phosphoserine is present on S332. A Glycyl lysine isopeptide (Lys-Gly) (interchain with G-Cter in ubiquitin) cross-link involves residue K337. S405 is subject to Phosphoserine. The segment at 473 to 577 (PPQFRNGPVY…KEQEQQTEQA (105 aa)) is interaction with SUP35. The region spanning 489-568 (GFPRNANDNN…ASAAYESFKK (80 aa)) is the PABC domain.

Belongs to the polyadenylate-binding protein type-1 family. As to quaternary structure, binds to poly(A) mRNA to form a periodic structure with a packing density of one molecule per 25 adenylate residues. Interacts with the nuclear export factor CRM1 and with the importin SXM1. Interacts with RNA15, a component of the cleavage factor IA (CFIA) complex. Interacts with translation initiation factor eIF4G (TIF4631 or TIF4632) and release factor eRF3 (SUP35). Interacts with the PAB-dependent poly(A)-nuclease (PAN) complex regulatory subunit PAN3. Interacts with ARF1, DCP1, PBP1, the Hsp70 chaperone SSA1, and TPA1. Interacts with PAT1 in an RNA-dependent manner.

It localises to the cytoplasm. The protein localises to the nucleus. Binds the poly(A) tail of mRNA. Appears to be an important mediator of the multiple roles of the poly(A) tail in mRNA biogenesis, stability and translation. In the nucleus, interacts with the nuclear cleavage factor IA (CFIA), which is required for both mRNA cleavage and polyadenylation. Is also required for efficient mRNA export to the cytoplasm. Acts in concert with a poly(A)-specific nuclease (PAN) to affect poly(A) tail shortening, which may occur concomitantly with either nucleocytoplasmic mRNA transport or translational initiation. Regulates PAN activity via interaction with the stimulator PAN3 or the inhibitor PBP1. In the cytoplasm, affects both translation and mRNA decay. Stimulates translation by interaction with translation initiation factor eIF4G, a subunit of the cap-binding complex eIF4F, bringing the 5'- and 3'-ends of the mRNA in proximity. The formation of this circular mRNP structure appears to be critical for the synergistic effects of the cap and the poly(A) tail in facilitating translation initiation, recycling of ribosomes, and mRNA stability. Also regulates translation termination by recruiting eukaryotic release factor 3 (eRF3). Interaction with eRF3 is also required for regulation of normal mRNA decay through translation termination-coupled poly(A) shortening, probably mediated by PAN. Loss of PAB1 from the mRNP after deadenylation triggers mRNA degradation. Inhibits the major cytoplasmic mRNA deadenylase CCR4-NOT complex. Is also associated peripherally with COPI vesicles through its interaction with ARF1, and this is required for correct localization of the asymmetrically distributed ASH1 mRNA. This Saccharomyces cerevisiae (strain ATCC 204508 / S288c) (Baker's yeast) protein is Polyadenylate-binding protein, cytoplasmic and nuclear (PAB1).